Consider the following 131-residue polypeptide: Small ribosomal subunit protein bS6 (131 aa).

Residues 100–131 (SPMVKAKDERRSRDYSLEDANMDAEEAGDSEE) are disordered. Basic and acidic residues predominate over residues 104-115 (KAKDERRSRDYS). Acidic residues predominate over residues 119–131 (ANMDAEEAGDSEE).

It belongs to the bacterial ribosomal protein bS6 family.

Binds together with bS18 to 16S ribosomal RNA. The sequence is that of Small ribosomal subunit protein bS6 from Photorhabdus laumondii subsp. laumondii (strain DSM 15139 / CIP 105565 / TT01) (Photorhabdus luminescens subsp. laumondii).